A 238-amino-acid polypeptide reads, in one-letter code: 1-(5-phosphoribosyl)-5-[(5-phosphoribosylamino)methylideneamino] imidazole-4-carboxamide isomerase (238 aa).

Asp8 functions as the Proton acceptor in the catalytic mechanism. Catalysis depends on Asp129, which acts as the Proton donor.

The protein belongs to the HisA/HisF family.

The protein localises to the cytoplasm. The enzyme catalyses 1-(5-phospho-beta-D-ribosyl)-5-[(5-phospho-beta-D-ribosylamino)methylideneamino]imidazole-4-carboxamide = 5-[(5-phospho-1-deoxy-D-ribulos-1-ylimino)methylamino]-1-(5-phospho-beta-D-ribosyl)imidazole-4-carboxamide. It participates in amino-acid biosynthesis; L-histidine biosynthesis; L-histidine from 5-phospho-alpha-D-ribose 1-diphosphate: step 4/9. This chain is 1-(5-phosphoribosyl)-5-[(5-phosphoribosylamino)methylideneamino] imidazole-4-carboxamide isomerase, found in Lacticaseibacillus casei (strain BL23) (Lactobacillus casei).